The primary structure comprises 106 residues: Pyrimidine/purine nucleoside phosphorylase (106 aa).

It belongs to the nucleoside phosphorylase PpnP family.

It catalyses the reaction a purine D-ribonucleoside + phosphate = a purine nucleobase + alpha-D-ribose 1-phosphate. The catalysed reaction is adenosine + phosphate = alpha-D-ribose 1-phosphate + adenine. It carries out the reaction cytidine + phosphate = cytosine + alpha-D-ribose 1-phosphate. The enzyme catalyses guanosine + phosphate = alpha-D-ribose 1-phosphate + guanine. It catalyses the reaction inosine + phosphate = alpha-D-ribose 1-phosphate + hypoxanthine. The catalysed reaction is thymidine + phosphate = 2-deoxy-alpha-D-ribose 1-phosphate + thymine. It carries out the reaction uridine + phosphate = alpha-D-ribose 1-phosphate + uracil. The enzyme catalyses xanthosine + phosphate = alpha-D-ribose 1-phosphate + xanthine. Its function is as follows. Catalyzes the phosphorolysis of diverse nucleosides, yielding D-ribose 1-phosphate and the respective free bases. Can use uridine, adenosine, guanosine, cytidine, thymidine, inosine and xanthosine as substrates. Also catalyzes the reverse reactions. The chain is Pyrimidine/purine nucleoside phosphorylase from Paraburkholderia xenovorans (strain LB400).